Consider the following 574-residue polypeptide: Probable E3 ubiquitin-protein ligase ipaH4.5 (574 aa).

The segment at 1–284 is interaction with target proteins; sequence MKPINNHSFF…YHGPQIYFSM (284 aa). 10 LRR repeats span residues 63 to 82, 83 to 104, 105 to 122, 123 to 143, 144 to 165, 166 to 183, 184 to 205, 206 to 223, 224 to 246, and 247 to 270; these read REPVLNLSLLKLRSLPPLPL, HIRELNISNNELISLPENSPLL, TELHVNGNNLNILPTLPS, QLIKLNISFNRNLSCLPSLPP, YLQSLSARFNSLETLPELPSTL, TILRIEGNRLTVLPELPH, RLQELFVSGNRLQELPEFPQSL, KYLKVGENQLRRLSRLPQ, ELLALDVSNNLLTSLPENIITLP, and ICTNVNISGNPLSTHVLQSLQRLT. Residues 285–292 are linker; the sequence is SDGQQNTL. The tract at residues 293–574 is E3 ubiquitin-protein ligase catalytic domain; the sequence is HRPLADAVTA…YRQLTDEVLA (282 aa). The NEL domain occupies 295–574; sequence PLADAVTAWF…YRQLTDEVLA (280 aa). Cys-379 functions as the Glycyl thioester intermediate in the catalytic mechanism.

It belongs to the LRR-containing bacterial E3 ligase family. Ubiquitinated in the presence of host E1 ubiquitin-activating enzyme, E2 ubiquitin-conjugating enzyme and ubiquitin.

Its subcellular location is the secreted. The protein localises to the host cytoplasm. It carries out the reaction S-ubiquitinyl-[E2 ubiquitin-conjugating enzyme]-L-cysteine + [acceptor protein]-L-lysine = [E2 ubiquitin-conjugating enzyme]-L-cysteine + N(6)-ubiquitinyl-[acceptor protein]-L-lysine.. Effector proteins function to alter host cell physiology and promote bacterial survival in host tissues. This protein is an E3 ubiquitin ligase that interferes with host's ubiquitination pathway. The chain is Probable E3 ubiquitin-protein ligase ipaH4.5 (ipaH4.5) from Shigella flexneri.